A 269-amino-acid chain; its full sequence is Tropinone reductase homolog At2g29320 (269 aa).

19–43 (LVTGAASGIGYAIVEELAGFGAKIH) provides a ligand contact to NADP(+). Residue Ser-152 participates in substrate binding. The active-site Proton acceptor is Tyr-166.

The protein belongs to the short-chain dehydrogenases/reductases (SDR) family. SDR65C subfamily.

The polypeptide is Tropinone reductase homolog At2g29320 (Arabidopsis thaliana (Mouse-ear cress)).